The sequence spans 189 residues: Elongation factor P (189 aa).

It belongs to the elongation factor P family.

It is found in the cytoplasm. The protein operates within protein biosynthesis; polypeptide chain elongation. Functionally, involved in peptide bond synthesis. Stimulates efficient translation and peptide-bond synthesis on native or reconstituted 70S ribosomes in vitro. Probably functions indirectly by altering the affinity of the ribosome for aminoacyl-tRNA, thus increasing their reactivity as acceptors for peptidyl transferase. This Aster yellows witches'-broom phytoplasma (strain AYWB) protein is Elongation factor P.